We begin with the raw amino-acid sequence, 508 residues long: Light-independent protochlorophyllide reductase subunit B (508 aa).

Residue aspartate 36 participates in [4Fe-4S] cluster binding. The active-site Proton donor is aspartate 294. A substrate-binding site is contributed by 429–430 (GM).

It belongs to the ChlB/BchB/BchZ family. As to quaternary structure, protochlorophyllide reductase is composed of three subunits; ChlL, ChlN and ChlB. Forms a heterotetramer of two ChlB and two ChlN subunits. It depends on [4Fe-4S] cluster as a cofactor.

It catalyses the reaction chlorophyllide a + oxidized 2[4Fe-4S]-[ferredoxin] + 2 ADP + 2 phosphate = protochlorophyllide a + reduced 2[4Fe-4S]-[ferredoxin] + 2 ATP + 2 H2O. It participates in porphyrin-containing compound metabolism; chlorophyll biosynthesis (light-independent). Its function is as follows. Component of the dark-operative protochlorophyllide reductase (DPOR) that uses Mg-ATP and reduced ferredoxin to reduce ring D of protochlorophyllide (Pchlide) to form chlorophyllide a (Chlide). This reaction is light-independent. The NB-protein (ChlN-ChlB) is the catalytic component of the complex. The polypeptide is Light-independent protochlorophyllide reductase subunit B (Trichormus variabilis (strain ATCC 29413 / PCC 7937) (Anabaena variabilis)).